Reading from the N-terminus, the 247-residue chain is uncharacterized protein (247 aa).

The N-acetyltransferase domain occupies 70 to 205 (ISLWMGPGNN…QKVPLEIMIR (136 aa)).

Belongs to the acetyltransferase family.

The protein localises to the endoplasmic reticulum. It localises to the golgi apparatus. Its subcellular location is the vacuole. This is an uncharacterized protein from Schizosaccharomyces pombe (strain 972 / ATCC 24843) (Fission yeast).